We begin with the raw amino-acid sequence, 203 residues long: LexA repressor 2 (203 aa).

The segment at residues 28-48 (MREIARHLNVNGTLGVAKHLE) is a DNA-binding region (H-T-H motif). Active-site for autocatalytic cleavage activity residues include Ser-122 and Lys-159.

It belongs to the peptidase S24 family. In terms of assembly, homodimer.

It catalyses the reaction Hydrolysis of Ala-|-Gly bond in repressor LexA.. Its function is as follows. Represses a number of genes involved in the response to DNA damage (SOS response), including recA and lexA. In the presence of single-stranded DNA, RecA interacts with LexA causing an autocatalytic cleavage which disrupts the DNA-binding part of LexA, leading to derepression of the SOS regulon and eventually DNA repair. The protein is LexA repressor 2 of Geobacter sulfurreducens (strain ATCC 51573 / DSM 12127 / PCA).